Consider the following 306-residue polypeptide: Beta-lactamase 1 (306 aa).

Positions 1 to 43 (MKNKRMLKIGMCVGILGLSVTSLEAFTGGALQVEAKEKTGQVK) are cleaved as a signal peptide. The Acyl-ester intermediate role is filled by serine 89. Glutamate 185 (proton acceptor) is an active-site residue. A substrate-binding site is contributed by 251–253 (KSG).

Belongs to the class-A beta-lactamase family.

It catalyses the reaction a beta-lactam + H2O = a substituted beta-amino acid. Functionally, this protein is a beta-lactamase with a substrate specificity for penicillins. This Bacillus mycoides protein is Beta-lactamase 1 (blaCI).